The chain runs to 169 residues: Chorismate pyruvate-lyase (169 aa).

4 residues coordinate substrate: M35, R77, L115, and E156.

It belongs to the UbiC family. As to quaternary structure, monomer.

The protein resides in the cytoplasm. The enzyme catalyses chorismate = 4-hydroxybenzoate + pyruvate. Its pathway is cofactor biosynthesis; ubiquinone biosynthesis. Functionally, removes the pyruvyl group from chorismate, with concomitant aromatization of the ring, to provide 4-hydroxybenzoate (4HB) for the ubiquinone pathway. In Cronobacter sakazakii (strain ATCC BAA-894) (Enterobacter sakazakii), this protein is Chorismate pyruvate-lyase.